The sequence spans 288 residues: Transposase InsF for insertion sequence IS3A (288 aa).

Residues 124–287 enclose the Integrase catalytic domain; that stretch reads YASGPNQKWA…SPEQFENKNL (164 aa).

The protein belongs to the transposase IS3/IS150/IS904 family.

Functionally, involved in the transposition of the insertion sequence IS3. This Escherichia coli (strain K12) protein is Transposase InsF for insertion sequence IS3A (insF1).